The primary structure comprises 167 residues: Transmembrane protein 229B (167 aa).

At 1-14 the chain is on the cytoplasmic side; it reads MASAEPLTALSRWY. The chain crosses the membrane as a helical span at residues 15–35; the sequence is LYAIHGYFCEVMFTAAWEFVV. At 36-40 the chain is on the extracellular side; the sequence is NFNWK. A helical membrane pass occupies residues 41–61; it reads FPGVTSVWALFIYGTSILIVE. Residues 62-73 lie on the Cytoplasmic side of the membrane; it reads RMYLRLRGRCPL. The helical transmembrane segment at 74–94 threads the bilayer; sequence LVRCVIYTLWTYLWEFTTGFI. Residues 95 to 109 lie on the Extracellular side of the membrane; the sequence is LRQFNACPWDYSQFD. A helical membrane pass occupies residues 110–130; sequence FDFMGLITLEYAVPWFCGALI. Residues 131–167 are Cytoplasmic-facing; the sequence is MEQFIIRNTLRLRFDKDAEPGEPASPPALANGHVKTD. The segment at 148–167 is disordered; that stretch reads AEPGEPASPPALANGHVKTD.

It belongs to the TMEM229 family.

It localises to the membrane. This is Transmembrane protein 229B (TMEM229B) from Mus musculus (Mouse).